The following is a 59-amino-acid chain: uncharacterized protein (59 aa).

This is an uncharacterized protein from Rickettsia conorii (strain ATCC VR-613 / Malish 7).